Here is a 517-residue protein sequence, read N- to C-terminus: Probable mannosyltransferase KTR7 (517 aa).

The Cytoplasmic segment spans residues 1–23 (MAIRLNPKVRRFLLDKCRQKRYG). A helical; Signal-anchor for type II membrane protein transmembrane segment spans residues 24–44 (FLFLGCIFAILYCMGTWPFFA). Residues 45-85 (KDIVHDPNNLPYSLQDYSTDKDEPFFRGCTDTKLYLQNPAY) are stem region. The Lumenal segment spans residues 45-517 (KDIVHDPNNL…IRRENFRVIE (473 aa)). Positions 86-517 (SKMNASFVML…IRRENFRVIE (432 aa)) are catalytic. N-linked (GlcNAc...) asparagine glycosylation is found at asparagine 89 and asparagine 144. Catalysis depends on glutamate 367, which acts as the Nucleophile.

This sequence belongs to the glycosyltransferase 15 family.

It is found in the membrane. Functionally, possible glycosyltransferase that transfers an alpha-D-mannosyl residue from GDP-mannose into lipid-linked oligosaccharide, forming an alpha-(1-&gt;2)-D-mannosyl-D-mannose linkage. This is Probable mannosyltransferase KTR7 (KTR7) from Saccharomyces cerevisiae (strain ATCC 204508 / S288c) (Baker's yeast).